The sequence spans 610 residues: MLFARRLEQLKDLNRIRNFSIIAHIDHGKSTLADRFIQICGGLTEREMSSQVLDSMDIERERGITIKAQCVSLNYTATDGKTYLLNFIDTPGHVDFSYEVSRSLAACEGAILVVDAAQGVEAQTLAVCYTAIDQSLTVLPVLNKIDLPQAEPERVISEIEDIIGLDAQDAIRVSAKSGLGVNDVLEALVANIPPPKGDVHAPLQALIIDSWFDSYLGVVSLVRIVNGSIRKGDKMRVMSTGRAYEVDQVGIFTPKRTKLDALYAGEVGYVVAGIKEIQGAPVGDTLTLDRNPADKVLPGFQRVKPQVYAGLFPVSSDDFEAFREALAKLSLNDASLFYEPESSEALGFGFRCGFLGMLHMEIIQERLEREYNLDLISTAPTVVYQIVTQKGETLLIDNPSHLPPTPQIKEMYEPIVRANILVPQDYLGPIITLCVERRGVQVSMTYSGRHVSVVYDIPMSEVVSDFFDRLKSVSRGYASLDYNFQRFQIADLVKMDILINSERVDALAVIVHRDSAHSRGKLIAEKMQQLIPRQMFDVAIQAAIGSHIIARQTVKALRKNVTAKCYGGDVTRKRKLLEKQKAGKKRMKQVGHVEIPQEAFMAVFQTDKKK.

One can recognise a tr-type G domain in the interval 14–196; it reads NRIRNFSIIA…ALVANIPPPK (183 aa). Residues 26–31 and 143–146 each bind GTP; these read DHGKST and NKID.

Belongs to the TRAFAC class translation factor GTPase superfamily. Classic translation factor GTPase family. LepA subfamily.

The protein localises to the cell inner membrane. It catalyses the reaction GTP + H2O = GDP + phosphate + H(+). Required for accurate and efficient protein synthesis under certain stress conditions. May act as a fidelity factor of the translation reaction, by catalyzing a one-codon backward translocation of tRNAs on improperly translocated ribosomes. Back-translocation proceeds from a post-translocation (POST) complex to a pre-translocation (PRE) complex, thus giving elongation factor G a second chance to translocate the tRNAs correctly. Binds to ribosomes in a GTP-dependent manner. This is Elongation factor 4 from Legionella pneumophila (strain Lens).